Reading from the N-terminus, the 481-residue chain is tRNA-2-methylthio-N(6)-dimethylallyladenosine synthase (481 aa).

The region spanning 24 to 140 is the MTTase N-terminal domain; it reads RKLFIESYGC…LPNLINEVEE (117 aa). Residues C33, C69, C103, C178, C182, and C185 each contribute to the [4Fe-4S] cluster site. Positions 164-410 constitute a Radical SAM core domain; that stretch reads QSNGVSAFVS…VDLQQKHSKQ (247 aa). Positions 413–476 constitute a TRAM domain; that stretch reads NSVIGTTVEV…SATLIGEPIG (64 aa).

Belongs to the methylthiotransferase family. MiaB subfamily. Monomer. Requires [4Fe-4S] cluster as cofactor.

The protein localises to the cytoplasm. It carries out the reaction N(6)-dimethylallyladenosine(37) in tRNA + (sulfur carrier)-SH + AH2 + 2 S-adenosyl-L-methionine = 2-methylsulfanyl-N(6)-dimethylallyladenosine(37) in tRNA + (sulfur carrier)-H + 5'-deoxyadenosine + L-methionine + A + S-adenosyl-L-homocysteine + 2 H(+). Catalyzes the methylthiolation of N6-(dimethylallyl)adenosine (i(6)A), leading to the formation of 2-methylthio-N6-(dimethylallyl)adenosine (ms(2)i(6)A) at position 37 in tRNAs that read codons beginning with uridine. The protein is tRNA-2-methylthio-N(6)-dimethylallyladenosine synthase of Christiangramia forsetii (strain DSM 17595 / CGMCC 1.15422 / KT0803) (Gramella forsetii).